The primary structure comprises 724 residues: Catalase-peroxidase (724 aa).

A cross-link (tryptophyl-tyrosyl-methioninium (Trp-Tyr) (with M-252)) is located at residues 98-226 (WHSAGSYRLA…LAAVQMGLIY (129 aa)). The active-site Proton acceptor is His99. The segment at residues 226 to 252 (YVNPEGVNGKPDPLKTAAQVRTTFARM) is a cross-link (tryptophyl-tyrosyl-methioninium (Tyr-Met) (with W-98)). Residue His267 participates in heme b binding.

It belongs to the peroxidase family. Peroxidase/catalase subfamily. Homodimer or homotetramer. It depends on heme b as a cofactor. Post-translationally, formation of the three residue Trp-Tyr-Met cross-link is important for the catalase, but not the peroxidase activity of the enzyme.

It carries out the reaction H2O2 + AH2 = A + 2 H2O. The catalysed reaction is 2 H2O2 = O2 + 2 H2O. Bifunctional enzyme with both catalase and broad-spectrum peroxidase activity. The sequence is that of Catalase-peroxidase from Maricaulis maris (strain MCS10) (Caulobacter maris).